The sequence spans 450 residues: Bifunctional protein GlmU (450 aa).

Residues 1–229 are pyrophosphorylase; the sequence is MGVALIVLAA…EAETLGINTR (229 aa). UDP-N-acetyl-alpha-D-glucosamine contacts are provided by residues 8-11, Lys-22, Gln-75, 80-81, 103-105, Gly-141, Glu-155, Asn-170, and Asn-227; these read LAAG, GT, and YGD. Position 105 (Asp-105) interacts with Mg(2+). Asn-227 lines the Mg(2+) pocket. A linker region spans residues 230–250; it reads TELAAAEQAFQARARARALED. An N-acetyltransferase region spans residues 251-450; the sequence is GVTLADPATT…RARKSAKGAQ (200 aa). Positions 316 and 334 each coordinate UDP-N-acetyl-alpha-D-glucosamine. His-346 functions as the Proton acceptor in the catalytic mechanism. UDP-N-acetyl-alpha-D-glucosamine contacts are provided by Tyr-349 and Asn-360. Acetyl-CoA is bound by residues Ala-363, 369 to 370, Ser-388, Thr-406, and Arg-423; that span reads NY.

In the N-terminal section; belongs to the N-acetylglucosamine-1-phosphate uridyltransferase family. This sequence in the C-terminal section; belongs to the transferase hexapeptide repeat family. In terms of assembly, homotrimer. Mg(2+) is required as a cofactor.

The protein resides in the cytoplasm. The enzyme catalyses alpha-D-glucosamine 1-phosphate + acetyl-CoA = N-acetyl-alpha-D-glucosamine 1-phosphate + CoA + H(+). It carries out the reaction N-acetyl-alpha-D-glucosamine 1-phosphate + UTP + H(+) = UDP-N-acetyl-alpha-D-glucosamine + diphosphate. The protein operates within nucleotide-sugar biosynthesis; UDP-N-acetyl-alpha-D-glucosamine biosynthesis; N-acetyl-alpha-D-glucosamine 1-phosphate from alpha-D-glucosamine 6-phosphate (route II): step 2/2. It functions in the pathway nucleotide-sugar biosynthesis; UDP-N-acetyl-alpha-D-glucosamine biosynthesis; UDP-N-acetyl-alpha-D-glucosamine from N-acetyl-alpha-D-glucosamine 1-phosphate: step 1/1. It participates in bacterial outer membrane biogenesis; LPS lipid A biosynthesis. Functionally, catalyzes the last two sequential reactions in the de novo biosynthetic pathway for UDP-N-acetylglucosamine (UDP-GlcNAc). The C-terminal domain catalyzes the transfer of acetyl group from acetyl coenzyme A to glucosamine-1-phosphate (GlcN-1-P) to produce N-acetylglucosamine-1-phosphate (GlcNAc-1-P), which is converted into UDP-GlcNAc by the transfer of uridine 5-monophosphate (from uridine 5-triphosphate), a reaction catalyzed by the N-terminal domain. The sequence is that of Bifunctional protein GlmU from Dinoroseobacter shibae (strain DSM 16493 / NCIMB 14021 / DFL 12).